The chain runs to 579 residues: uncharacterized protein (579 aa).

This sequence belongs to the UbiD family.

This is an uncharacterized protein from Chlamydia muridarum (strain MoPn / Nigg).